The following is a 537-amino-acid chain: Putative cysteine ligase BshC (537 aa).

A coiled-coil region spans residues methionine 383 to asparagine 451.

Belongs to the BshC family.

Involved in bacillithiol (BSH) biosynthesis. May catalyze the last step of the pathway, the addition of cysteine to glucosamine malate (GlcN-Mal) to generate BSH. The polypeptide is Putative cysteine ligase BshC (Staphylococcus haemolyticus (strain JCSC1435)).